The following is a 473-amino-acid chain: Argininosuccinate lyase (473 aa).

This sequence belongs to the lyase 1 family. Argininosuccinate lyase subfamily.

Its subcellular location is the cytoplasm. The catalysed reaction is 2-(N(omega)-L-arginino)succinate = fumarate + L-arginine. It participates in amino-acid biosynthesis; L-arginine biosynthesis; L-arginine from L-ornithine and carbamoyl phosphate: step 3/3. This chain is Argininosuccinate lyase, found in Nocardia farcinica (strain IFM 10152).